A 371-amino-acid polypeptide reads, in one-letter code: tRNA-specific 2-thiouridylase MnmA (371 aa).

ATP is bound by residues 13–20 (GMSGGVDS) and Met-39. Residues 99-101 (NPD) are interaction with target base in tRNA. Cys-104 serves as the catalytic Nucleophile. Cys-104 and Cys-200 are disulfide-bonded. Gly-128 contacts ATP. Positions 150 to 152 (KDQ) are interaction with tRNA. Residue Cys-200 is the Cysteine persulfide intermediate of the active site. Positions 308 to 309 (RY) are interaction with tRNA.

This sequence belongs to the MnmA/TRMU family.

The protein resides in the cytoplasm. It carries out the reaction S-sulfanyl-L-cysteinyl-[protein] + uridine(34) in tRNA + AH2 + ATP = 2-thiouridine(34) in tRNA + L-cysteinyl-[protein] + A + AMP + diphosphate + H(+). Its function is as follows. Catalyzes the 2-thiolation of uridine at the wobble position (U34) of tRNA, leading to the formation of s(2)U34. This chain is tRNA-specific 2-thiouridylase MnmA, found in Bacillus cereus (strain ATCC 10987 / NRS 248).